We begin with the raw amino-acid sequence, 191 residues long: UPF0398 protein LSEI_1479 (191 aa).

Belongs to the UPF0398 family.

This is UPF0398 protein LSEI_1479 from Lacticaseibacillus paracasei (strain ATCC 334 / BCRC 17002 / CCUG 31169 / CIP 107868 / KCTC 3260 / NRRL B-441) (Lactobacillus paracasei).